The chain runs to 72 residues: Bradykinin-potentiating peptide BmKbpp (72 aa).

A signal peptide spans 1 to 22 (MNKKTLLVIFFVTMLIVDEVNS). Residues 70–72 (RRR) constitute a propeptide that is removed on maturation.

Belongs to the non-disulfide-bridged peptide (NDBP) superfamily. Long chain multifunctional peptide (group 2) family. Expressed by the venom gland.

It is found in the secreted. In terms of biological role, amphipathic peptide that shows bradykinin potentiating activity and antimicrobial activities against bacteria and fungi. Has higher antibacterial activities against Gram-negative than against Gram-positive bacteria. Also inhibits NADPH oxidase-dependent superoxide production (IC(50) is 0.4 uM on granulocytes stimulated with PMA, IC(50) is 0.51 uM on HL-60 cells undifferentiated and IC(50) is 0.53 uM on HL-60 cells treated with DMSO). The C-terminal peptide shows a higher bradykinin potentiating activity than the complete peptide. The protein is Bradykinin-potentiating peptide BmKbpp of Olivierus martensii (Manchurian scorpion).